Consider the following 462-residue polypeptide: GTPase Der (462 aa).

EngA-type G domains are found at residues 3–170 and 201–372; these read ITIA…TSQK and IKIA…FNSI. GTP is bound by residues 9–16, 57–61, 122–125, 207–214, 254–258, and 319–322; these read GRTNVGKS, DTPGI, NKIE, GKPNVGKS, DTAGI, and NKND. Positions 373 to 457 constitute a KH-like domain; sequence KKIHTSKITE…SIVLYFKSSK (85 aa).

Belongs to the TRAFAC class TrmE-Era-EngA-EngB-Septin-like GTPase superfamily. EngA (Der) GTPase family. Associates with the 50S ribosomal subunit.

In terms of biological role, GTPase that plays an essential role in the late steps of ribosome biogenesis. This Buchnera aphidicola subsp. Baizongia pistaciae (strain Bp) protein is GTPase Der.